The following is a 549-amino-acid chain: Antagonist of mitotic exit network protein 1 (549 aa).

Residues 1–11 show a composition bias toward polar residues; that stretch reads MKLERVSSNGS. The segment at 1–39 is disordered; sequence MKLERVSSNGSFKRGRDIQSLESPCTRPLKKMSPSPSFT.

It belongs to the AMN1 family. Interacts with TEM1.

It is found in the cytoplasm. The protein localises to the nucleus. In terms of biological role, negative regulator of the mitotic exit network (MEN), required for multiple cell cycle checkpoints. Acts in the daughter cell to inhibit the mitotic exit pathway once MEN has executed its function. Through its binding ability to TEM1, interferes with the TEM1-CDC5 association, required for CDC5 kinase activation and MEN activation. Required for daughter cell separation and chromosome stability. Involved in copper sensitivity. In Saccharomyces cerevisiae (strain ATCC 204508 / S288c) (Baker's yeast), this protein is Antagonist of mitotic exit network protein 1 (AMN1).